We begin with the raw amino-acid sequence, 348 residues long: Rhodopsin (348 aa).

At 1-33 (TEGPYFYVPMVNTTGIVRSPYEYPQYYLVNPAA) the chain is on the extracellular side. The N-linked (GlcNAc...) asparagine glycan is linked to Asn12. Residues 34 to 58 (FAILGAYMFFLIIVGFPVNFMTLYV) traverse the membrane as a helical segment. The Cytoplasmic portion of the chain corresponds to 59 to 70 (TLEHKKLRTPLN). The helical transmembrane segment at 71–93 (YILLNLAVADLFMVIGGFTTTMY) threads the bilayer. Over 94–107 (TSMHGYFVLGRLGC) the chain is Extracellular. A disulfide bridge links Cys107 with Cys184. Residues 108–130 (NLEGFFATLGGMISLWSLAVLAI) traverse the membrane as a helical segment. The short motif at 131-133 (ERW) is the 'Ionic lock' involved in activated form stabilization element. At 131–149 (ERWVVVCKPISNFRFGENH) the chain is on the cytoplasmic side. Residues 150–170 (AIMGVSLTWGMALACTVPPLV) form a helical membrane-spanning segment. Residues 171 to 199 (GWSRYIPEGMQCSCGIDYYTRAEGFNNET) lie on the Extracellular side of the membrane. A glycan (N-linked (GlcNAc...) asparagine) is linked at Asn197. Residues 200–221 (FVLYMFCCHFTVPLTIIFFCYG) traverse the membrane as a helical segment. The Cytoplasmic portion of the chain corresponds to 222–249 (RLLCAVKEAAAAQQESETTQRAEREVTR). Residues 250 to 271 (MVVIMVIGFLVCWLPYASVAWF) form a helical membrane-spanning segment. Topologically, residues 272–283 (VFTHQGSEFGPL) are extracellular. A helical transmembrane segment spans residues 284–305 (FMTIPAFFAKSSAIYNPMIYIC). Residue Lys293 is modified to N6-(retinylidene)lysine. The Cytoplasmic portion of the chain corresponds to 306-348 (MNKQFRHCMITTLFCGKNPFEGEEEGASSTKTEASSASSVSPA). Cys320 carries the S-palmitoyl cysteine lipid modification. The interval 327-348 (GEEEGASSTKTEASSASSVSPA) is disordered. The segment covering 332–348 (ASSTKTEASSASSVSPA) has biased composition (low complexity).

The protein belongs to the G-protein coupled receptor 1 family. Opsin subfamily. Post-translationally, phosphorylated on some or all of the serine and threonine residues present in the C-terminal region. Contains one covalently linked retinal chromophore.

The protein resides in the membrane. It is found in the cell projection. It localises to the cilium. Its subcellular location is the photoreceptor outer segment. Its function is as follows. Photoreceptor required for image-forming vision at low light intensity. While most salt water fish species use retinal as chromophore, most freshwater fish use 3-dehydroretinal, or a mixture of retinal and 3-dehydroretinal. Light-induced isomerization of 11-cis to all-trans retinal triggers a conformational change that activates signaling via G-proteins. Subsequent receptor phosphorylation mediates displacement of the bound G-protein alpha subunit by arrestin and terminates signaling. This chain is Rhodopsin (rho), found in Sargocentron xantherythrum (Hawaiian squirrelfish).